We begin with the raw amino-acid sequence, 370 residues long: Phospho-N-acetylmuramoyl-pentapeptide-transferase (370 aa).

The next 11 helical transmembrane spans lie at 15-35, 44-64, 93-113, 115-135, 155-175, 183-203, 213-233, 240-260, 268-288, 296-316, and 347-367; these read PLEG…AAFA, LLSL…WWGV, MGGL…SWSG, AAEQ…VGGI, LLLQ…RGWI, FDIN…VFLA, GLDG…ALQL, GDPS…GFLV, VFMG…VALL, LIMG…VWVF, and QLVV…GIFF.

The protein belongs to the glycosyltransferase 4 family. MraY subfamily. Mg(2+) is required as a cofactor.

It localises to the cell inner membrane. It catalyses the reaction UDP-N-acetyl-alpha-D-muramoyl-L-alanyl-gamma-D-glutamyl-meso-2,6-diaminopimeloyl-D-alanyl-D-alanine + di-trans,octa-cis-undecaprenyl phosphate = di-trans,octa-cis-undecaprenyl diphospho-N-acetyl-alpha-D-muramoyl-L-alanyl-D-glutamyl-meso-2,6-diaminopimeloyl-D-alanyl-D-alanine + UMP. Its pathway is cell wall biogenesis; peptidoglycan biosynthesis. Its function is as follows. Catalyzes the initial step of the lipid cycle reactions in the biosynthesis of the cell wall peptidoglycan: transfers peptidoglycan precursor phospho-MurNAc-pentapeptide from UDP-MurNAc-pentapeptide onto the lipid carrier undecaprenyl phosphate, yielding undecaprenyl-pyrophosphoryl-MurNAc-pentapeptide, known as lipid I. This Synechococcus sp. (strain CC9311) protein is Phospho-N-acetylmuramoyl-pentapeptide-transferase.